Consider the following 274-residue polypeptide: Shikimate dehydrogenase (NADP(+)) (274 aa).

Residues 14–16 (SKS) and Thr60 contribute to the shikimate site. Lys64 functions as the Proton acceptor in the catalytic mechanism. Glu76 serves as a coordination point for NADP(+). The shikimate site is built by Asn85 and Asp101. NADP(+)-binding positions include 126–130 (GAGGA), 150–155 (NRTAEK), and Met214. Tyr216 serves as a coordination point for shikimate. Residue Gly238 participates in NADP(+) binding.

Belongs to the shikimate dehydrogenase family. As to quaternary structure, homodimer.

The catalysed reaction is shikimate + NADP(+) = 3-dehydroshikimate + NADPH + H(+). It participates in metabolic intermediate biosynthesis; chorismate biosynthesis; chorismate from D-erythrose 4-phosphate and phosphoenolpyruvate: step 4/7. Functionally, involved in the biosynthesis of the chorismate, which leads to the biosynthesis of aromatic amino acids. Catalyzes the reversible NADPH linked reduction of 3-dehydroshikimate (DHSA) to yield shikimate (SA). The sequence is that of Shikimate dehydrogenase (NADP(+)) from Pseudomonas paraeruginosa (strain DSM 24068 / PA7) (Pseudomonas aeruginosa (strain PA7)).